The sequence spans 271 residues: Neurexophilin-1 (271 aa).

The signal sequence occupies residues 1–21; that stretch reads MQAACWYVLLLLQPTVYLVTC. An II region spans residues 22-97; the sequence is ANLTNGGKSE…WDWLRNSTDL (76 aa). Residues N23, N68, N93, N146, N156, and N162 are each glycosylated (N-linked (GlcNAc...) asparagine). The III stretch occupies residues 98-176; it reads QEPRPRAKRR…LVPPTKIVEF (79 aa). The IV (linker domain) stretch occupies residues 177–185; the sequence is DLAQQTVID. Residues 186 to 271 are v (Cys-rich); that stretch reads AKDSKSFNCR…HSDTPYFPSG (86 aa).

The protein belongs to the neurexophilin family. May be proteolytically processed at the boundary between the N-terminal non-conserved and the central conserved domain in neuron-like cells.

It localises to the secreted. Functionally, may be signaling molecules that resemble neuropeptides. Ligand for alpha-neurexins. The chain is Neurexophilin-1 (NXPH1) from Bos taurus (Bovine).